A 432-amino-acid chain; its full sequence is Glutamate-1-semialdehyde 2,1-aminomutase (432 aa).

N6-(pyridoxal phosphate)lysine is present on Lys-269.

This sequence belongs to the class-III pyridoxal-phosphate-dependent aminotransferase family. HemL subfamily. Homodimer. It depends on pyridoxal 5'-phosphate as a cofactor.

The protein resides in the cytoplasm. It carries out the reaction (S)-4-amino-5-oxopentanoate = 5-aminolevulinate. It participates in porphyrin-containing compound metabolism; protoporphyrin-IX biosynthesis; 5-aminolevulinate from L-glutamyl-tRNA(Glu): step 2/2. It functions in the pathway porphyrin-containing compound metabolism; chlorophyll biosynthesis. The chain is Glutamate-1-semialdehyde 2,1-aminomutase from Chloroherpeton thalassium (strain ATCC 35110 / GB-78).